Here is a 613-residue protein sequence, read N- to C-terminus: Zinc metalloproteinase-disintegrin-like MTP8 (613 aa).

Positions 1–20 are cleaved as a signal peptide; that stretch reads MIEVLLVTICFTVFPYQGSP. A propeptide spanning residues 21 to 191 is cleaved from the precursor; sequence IILESGNVND…DETIEKISQL (171 aa). Positions 205–401 constitute a Peptidase M12B domain; it reads KYIELYVVVD…VRPQCILNKP (197 aa). E208 is a binding site for Ca(2+). Residue N282 is glycosylated (N-linked (GlcNAc...) asparagine). Residue D292 participates in Ca(2+) binding. 3 disulfides stabilise this stretch: C316/C396, C356/C380, and C358/C363. The Zn(2+) site is built by H341, H345, and H351. 7 residues coordinate Ca(2+): C396, N399, N414, F416, E418, E421, and D424. The region spanning 409 to 495 is the Disintegrin domain; that stretch reads PPVCGNYFVE…KCPTDSFQRN (87 aa). 15 disulfides stabilise this stretch: C412/C441, C423/C436, C425/C431, C435/C458, C449/C455, C454/C480, C467/C487, C474/C506, C499/C511, C518/C568, C533/C575, C543/C577, C546/C556, C563/C601, and C595/C606. A glycan (N-linked (GlcNAc...) asparagine) is linked at N437. The short motif at 473 to 475 is the D/ECD-tripeptide element; sequence DCD. 4 residues coordinate Ca(2+): D475, L476, E478, and D490. N-linked (GlcNAc...) asparagine glycans are attached at residues N550 and N572.

The protein belongs to the venom metalloproteinase (M12B) family. P-III subfamily. As to quaternary structure, monomer. It depends on Zn(2+) as a cofactor. Expressed by the venom gland.

It localises to the secreted. Functionally, snake venom zinc metalloproteinase that may impair hemostasis in the prey. This chain is Zinc metalloproteinase-disintegrin-like MTP8, found in Drysdalia coronoides (White-lipped snake).